The sequence spans 196 residues: Protein LSM12 homolog A (196 aa).

A Sm domain is found at 3–73 (APGPGEYFSV…VSEVDIINDR (71 aa)). One can recognise an AD domain in the interval 81 to 175 (ASLNISKLAN…IVEKHFRDVE (95 aa)). The tract at residues 174 to 196 (VESQKTMQRSQAQQTQKDSSLSS) is disordered. The span at 177–196 (QKTMQRSQAQQTQKDSSLSS) shows a compositional bias: polar residues.

This sequence belongs to the LSM12 family.

The polypeptide is Protein LSM12 homolog A (lsm12a) (Danio rerio (Zebrafish)).